Here is a 1551-residue protein sequence, read N- to C-terminus: Pentafunctional AROM polypeptide 1 (1551 aa).

The 3-dehydroquinate synthase stretch occupies residues 1–379 (MSIEKVSILG…YESKAHQIFK (379 aa)). NAD(+) is bound by residues 42–44 (DTN), 80–83 (ENHK), 111–113 (GGV), and aspartate 116. Arginine 127 lines the 7-phospho-2-dehydro-3-deoxy-D-arabino-heptonate pocket. 136 to 137 (TT) lines the NAD(+) pocket. Positions 143 and 149 each coordinate 7-phospho-2-dehydro-3-deoxy-D-arabino-heptonate. Lysine 158 lines the NAD(+) pocket. Asparagine 159 provides a ligand contact to 7-phospho-2-dehydro-3-deoxy-D-arabino-heptonate. NAD(+) contacts are provided by residues 176-179 (FLQT) and asparagine 187. Residue glutamate 191 coordinates Zn(2+). 7-phospho-2-dehydro-3-deoxy-D-arabino-heptonate is bound by residues 191–194 (EVVK) and lysine 243. The active-site Proton acceptor; for 3-dehydroquinate synthase activity is the glutamate 253. 7-phospho-2-dehydro-3-deoxy-D-arabino-heptonate is bound by residues 257 to 261 (RNLLN) and histidine 264. Zn(2+) is bound at residue histidine 264. Histidine 268 (proton acceptor; for 3-dehydroquinate synthase activity) is an active-site residue. Residues histidine 280 and lysine 351 each coordinate 7-phospho-2-dehydro-3-deoxy-D-arabino-heptonate. Histidine 280 is a Zn(2+) binding site. The tract at residues 392-835 (VHPFANRHPE…WDVLHSKFNA (444 aa)) is EPSP synthase. The shikimate kinase stretch occupies residues 854–1044 (DRSIVIIGMR…LPATRSTFVT (191 aa)). 861 to 868 (GMRAAGKT) is an ATP binding site. The segment at 1045–1258 (LTYPDLRKVP…IGVGQLSLKE (214 aa)) is 3-dehydroquinase. The active-site Proton acceptor; for 3-dehydroquinate dehydratase activity is histidine 1162. Lysine 1191 functions as the Schiff-base intermediate with substrate; for 3-dehydroquinate dehydratase activity in the catalytic mechanism. Positions 1271-1551 (EKEFWVVGSP…KVIHSAVLNE (281 aa)) are shikimate dehydrogenase.

This sequence in the N-terminal section; belongs to the sugar phosphate cyclases superfamily. Dehydroquinate synthase family. It in the 2nd section; belongs to the EPSP synthase family. The protein in the 3rd section; belongs to the shikimate kinase family. In the 4th section; belongs to the type-I 3-dehydroquinase family. This sequence in the C-terminal section; belongs to the shikimate dehydrogenase family. In terms of assembly, homodimer. It depends on Zn(2+) as a cofactor.

Its subcellular location is the cytoplasm. It carries out the reaction 7-phospho-2-dehydro-3-deoxy-D-arabino-heptonate = 3-dehydroquinate + phosphate. The catalysed reaction is 3-dehydroquinate = 3-dehydroshikimate + H2O. It catalyses the reaction shikimate + NADP(+) = 3-dehydroshikimate + NADPH + H(+). The enzyme catalyses shikimate + ATP = 3-phosphoshikimate + ADP + H(+). It carries out the reaction 3-phosphoshikimate + phosphoenolpyruvate = 5-O-(1-carboxyvinyl)-3-phosphoshikimate + phosphate. The protein operates within metabolic intermediate biosynthesis; chorismate biosynthesis; chorismate from D-erythrose 4-phosphate and phosphoenolpyruvate: step 2/7. It functions in the pathway metabolic intermediate biosynthesis; chorismate biosynthesis; chorismate from D-erythrose 4-phosphate and phosphoenolpyruvate: step 3/7. Its pathway is metabolic intermediate biosynthesis; chorismate biosynthesis; chorismate from D-erythrose 4-phosphate and phosphoenolpyruvate: step 4/7. It participates in metabolic intermediate biosynthesis; chorismate biosynthesis; chorismate from D-erythrose 4-phosphate and phosphoenolpyruvate: step 5/7. The protein operates within metabolic intermediate biosynthesis; chorismate biosynthesis; chorismate from D-erythrose 4-phosphate and phosphoenolpyruvate: step 6/7. In terms of biological role, the AROM polypeptide catalyzes 5 consecutive enzymatic reactions in prechorismate polyaromatic amino acid biosynthesis. The chain is Pentafunctional AROM polypeptide 1 from Lodderomyces elongisporus (strain ATCC 11503 / CBS 2605 / JCM 1781 / NBRC 1676 / NRRL YB-4239) (Yeast).